Consider the following 134-residue polypeptide: MNDEQRYKQGLEVRTEVLGEKHVNRSLENLNDFNQDFQNFISRFAWGEVWSRPGLPRHTRSLVTIAVLLALGREDELRMHLRACFNNGVTKDELKELILHCSLYAGLPASNAAMHMAEEVFKDLGIAPEKVNKD.

Belongs to the carboxymuconolactone decarboxylase family.

The catalysed reaction is (R)-2-(carboxymethyl)-5-oxo-2,5-dihydro-2-furoate + H(+) = (4,5-dihydro-5-oxofuran-2-yl)-acetate + CO2. Its pathway is aromatic compound metabolism; beta-ketoadipate pathway; 5-oxo-4,5-dihydro-2-furylacetate from 3-carboxy-cis,cis-muconate: step 2/2. The sequence is that of 4-carboxymuconolactone decarboxylase (pcaC) from Acinetobacter baylyi (strain ATCC 33305 / BD413 / ADP1).